The sequence spans 250 residues: Ditrans,polycis-undecaprenyl-diphosphate synthase ((2E,6E)-farnesyl-diphosphate specific) (250 aa).

Aspartate 20 is a catalytic residue. Mg(2+) is bound at residue aspartate 20. Substrate-binding positions include 21–24 (GNGR), tryptophan 25, arginine 33, histidine 37, and 65–67 (SSE). Asparagine 68 functions as the Proton acceptor in the catalytic mechanism. Substrate contacts are provided by residues tryptophan 69, arginine 71, arginine 188, and 194–196 (RIS). Glutamate 207 is a Mg(2+) binding site.

This sequence belongs to the UPP synthase family. Homodimer. Mg(2+) is required as a cofactor.

It catalyses the reaction 8 isopentenyl diphosphate + (2E,6E)-farnesyl diphosphate = di-trans,octa-cis-undecaprenyl diphosphate + 8 diphosphate. In terms of biological role, catalyzes the sequential condensation of isopentenyl diphosphate (IPP) with (2E,6E)-farnesyl diphosphate (E,E-FPP) to yield (2Z,6Z,10Z,14Z,18Z,22Z,26Z,30Z,34E,38E)-undecaprenyl diphosphate (di-trans,octa-cis-UPP). UPP is the precursor of glycosyl carrier lipid in the biosynthesis of bacterial cell wall polysaccharide components such as peptidoglycan and lipopolysaccharide. The polypeptide is Ditrans,polycis-undecaprenyl-diphosphate synthase ((2E,6E)-farnesyl-diphosphate specific) (Vibrio cholerae serotype O1 (strain ATCC 39315 / El Tor Inaba N16961)).